Consider the following 421-residue polypeptide: Synaptotagmin-12 (421 aa).

Residues 1 to 18 (MAVDVTEYHLSVIKSPPG) are Vesicular-facing. The helical transmembrane segment at 19-39 (WEVGVYAAGALALLGIAAVSL) threads the bilayer. The Cytoplasmic portion of the chain corresponds to 40–421 (WKLWTSGSFP…VSMWHPVRRN (382 aa)). Residue Ser97 is modified to Phosphoserine; by PKA. Ser99 and Ser214 each carry phosphoserine. C2 domains lie at 152–272 (TLGQ…SGWL) and 283–416 (AVGE…SMWH).

Belongs to the synaptotagmin family. In terms of assembly, homodimer. Can also form heterodimers. Interacts with SYT1. Phosphorylation of Ser-97 is required for mossy-fiber long-term potentiation. In terms of tissue distribution, expressed in the brain, specifically by neurons in the hippocampus, and in the adrenal medulla (at protein level).

The protein resides in the cytoplasmic vesicle. It is found in the secretory vesicle. Its subcellular location is the synaptic vesicle membrane. Synaptic vesicle phosphoprotein that enhances spontaneous neurotransmitter release but does not effect induced neurotransmitter release. Unlike other synaptotagmins, it does not bind Ca(2+) or phospholipids. Essential for mossy-fiber long-term potentiation in the hippocampus. This chain is Synaptotagmin-12, found in Mus musculus (Mouse).